The following is an 85-amino-acid chain: Large ribosomal subunit protein bL27 (85 aa).

Residues 1–20 (MATKKAGGSTRNGRDSEAKR) form a disordered region.

Belongs to the bacterial ribosomal protein bL27 family.

This chain is Large ribosomal subunit protein bL27, found in Haemophilus influenzae (strain PittEE).